We begin with the raw amino-acid sequence, 202 residues long: MHNASDIQNALVPMVIEQTAKGERSYDIYSRLLKERIIFLVGQVEEHMANLIVAQLLFLESESPDKDIFLYINSPGGSVTAGMAIYDTMQFIKPNVSTVCIGQAASMGAFLLAGGEKGKRFCLPNSRVMIHQPLGGFQGQASDIAIHAQEILGIKHKLNLMLAEHTGQPLEVIERDTDRDNFMSATQAVEYGLVDSVMTKRG.

Serine 106 (nucleophile) is an active-site residue. Histidine 131 is an active-site residue.

The protein belongs to the peptidase S14 family. Fourteen ClpP subunits assemble into 2 heptameric rings which stack back to back to give a disk-like structure with a central cavity, resembling the structure of eukaryotic proteasomes.

Its subcellular location is the cytoplasm. The enzyme catalyses Hydrolysis of proteins to small peptides in the presence of ATP and magnesium. alpha-casein is the usual test substrate. In the absence of ATP, only oligopeptides shorter than five residues are hydrolyzed (such as succinyl-Leu-Tyr-|-NHMec, and Leu-Tyr-Leu-|-Tyr-Trp, in which cleavage of the -Tyr-|-Leu- and -Tyr-|-Trp bonds also occurs).. Functionally, cleaves peptides in various proteins in a process that requires ATP hydrolysis. Has a chymotrypsin-like activity. Plays a major role in the degradation of misfolded proteins. The sequence is that of ATP-dependent Clp protease proteolytic subunit from Shewanella sp. (strain W3-18-1).